The sequence spans 103 residues: MKNQKIRIRLKAFDYKLIDQSAAEIVDTAKRTGAVVRGPVPLPTRIRRYDVLRSPHVNKSSRDQFEIRTHQRLMDIVDPTDKTVDALMRLDLPAGVDVEIALQ.

It belongs to the universal ribosomal protein uS10 family. Part of the 30S ribosomal subunit.

Its function is as follows. Involved in the binding of tRNA to the ribosomes. This chain is Small ribosomal subunit protein uS10, found in Bordetella petrii (strain ATCC BAA-461 / DSM 12804 / CCUG 43448).